Reading from the N-terminus, the 410-residue chain is MAAVGAEARGAWCVPCLVSLDTLQELCRKEKLTCKSIGITKRNLNNYEVEYLCDYKVVKDMEYYLVKWKGWPDSTNTWEPLQNLKCPLLLQQFSNDKHNYLSQVKKGKAITPKNNNKTLKPAIAEYIVKKAKQRIALQRWQDELNRRKNHKGMIFVENTVDLEGPPSDFYYINEYKPAPGISLVNEATFGCSCTDCFFQKCCPAEAGVLLAYNKNQQIKIPPGTPIYECNSRCQCGPDCPNRIVQKGTQYSLCIFRTSNGRGWGVKTLVKIKRMSFVMEYVGEVITSEEAERRGQFYDNKGITYLFDLDYESDEFTVDAARYGNVSHFVNHSCDPNLQVFNVFIDNLDTRLPRIALFSTRTINAGEELTFDYQMKGSGDISSDSIDHSPAKKRVRTVCKCGAVTCRGYLN.

One can recognise a Chromo domain in the interval 47-105 (YEVEYLCDYKVVKDMEYYLVKWKGWPDSTNTWEPLQNLKCPLLLQQFSNDKHNYLSQVK). Positions 189 to 247 (FGCSCTDCFFQKCCPAEAGVLLAYNKNQQIKIPPGTPIYECNSRCQCGPDCPNRIVQKG) constitute a Pre-SET domain. Zn(2+) is bound by residues Cys-191, Cys-193, Cys-196, Cys-201, Cys-202, Cys-229, Cys-233, Cys-235, and Cys-239. Residues 250–373 (YSLCIFRTSN…AGEELTFDYQ (124 aa)) form the SET domain. Residues 261–263 (RGW), Tyr-304, and 330–331 (NH) each bind S-adenosyl-L-methionine. Zn(2+) is bound at residue Cys-333. Ser-381, Ser-384, and Ser-388 each carry phosphoserine. Residues 394-410 (VRTVCKCGAVTCRGYLN) enclose the Post-SET domain. 3 residues coordinate Zn(2+): Cys-398, Cys-400, and Cys-405.

Belongs to the class V-like SAM-binding methyltransferase superfamily. Histone-lysine methyltransferase family. Suvar3-9 subfamily. As to quaternary structure, interacts with SMAD5. The large PER complex involved in the histone methylation is composed of at least PER2, CBX3, TRIM28, SUV39H1 and/or SUV39H2; CBX3 mediates the formation of the complex. Ubiquitinated by the DCX(DCAF13) E3 ubiquitin ligase complex, leading to its degradation.

The protein localises to the nucleus. It is found in the chromosome. The protein resides in the centromere. The enzyme catalyses L-lysyl(9)-[histone H3] + 3 S-adenosyl-L-methionine = N(6),N(6),N(6)-trimethyl-L-lysyl(9)-[histone H3] + 3 S-adenosyl-L-homocysteine + 3 H(+). Histone methyltransferase that specifically trimethylates 'Lys-9' of histone H3 using monomethylated H3 'Lys-9' as substrate. H3 'Lys-9' trimethylation represents a specific tag for epigenetic transcriptional repression by recruiting HP1 (CBX1, CBX3 and/or CBX5) proteins to methylated histones. Mainly functions in heterochromatin regions, thereby playing a central role in the establishment of constitutive heterochromatin at pericentric and telomere regions. H3 'Lys-9' trimethylation is also required to direct DNA methylation at pericentric repeats. SUV39H1 is targeted to histone H3 via its interaction with RB1 and is involved in many processes, such as cell cycle regulation, transcriptional repression and regulation of telomere length. May participate in regulation of higher-order chromatin organization during spermatogenesis. Recruited by the large PER complex to the E-box elements of the circadian target genes such as PER2 itself or PER1, contributes to the conversion of local chromatin to a heterochromatin-like repressive state through H3 'Lys-9' trimethylation. In Macaca fascicularis (Crab-eating macaque), this protein is Histone-lysine N-methyltransferase SUV39H2 (SUV39H2).